Here is a 529-residue protein sequence, read N- to C-terminus: Peptide chain release factor 3 (529 aa).

The tr-type G domain occupies 11–280 (AKRRTFAIIS…GLVEWAPAPM (270 aa)). GTP-binding positions include 20–27 (SHPDAGKT), 88–92 (DTPGH), and 142–145 (NKLD).

The protein belongs to the TRAFAC class translation factor GTPase superfamily. Classic translation factor GTPase family. PrfC subfamily.

It localises to the cytoplasm. Increases the formation of ribosomal termination complexes and stimulates activities of RF-1 and RF-2. It binds guanine nucleotides and has strong preference for UGA stop codons. It may interact directly with the ribosome. The stimulation of RF-1 and RF-2 is significantly reduced by GTP and GDP, but not by GMP. In Yersinia enterocolitica serotype O:8 / biotype 1B (strain NCTC 13174 / 8081), this protein is Peptide chain release factor 3.